The primary structure comprises 621 residues: Bifunctional protein GlmU (621 aa).

A pyrophosphorylase region spans residues 1-229 (MAERDLAVAI…AREIVGINDR (229 aa)). Residues 11 to 14 (LAAG), K25, Q76, and 81 to 82 (GT) each bind UDP-N-acetyl-alpha-D-glucosamine. D106 serves as a coordination point for Mg(2+). Residues G143, E158, N173, and N227 each coordinate UDP-N-acetyl-alpha-D-glucosamine. N227 lines the Mg(2+) pocket. Residues 230-250 (RQLAQAYQILQDRLKEAWMEA) are linker. The segment at 251-621 (GVTFVDPDSV…TGVGIPSCPP (371 aa)) is N-acetyltransferase. R332 and K350 together coordinate UDP-N-acetyl-alpha-D-glucosamine. The active-site Proton acceptor is H362. UDP-N-acetyl-alpha-D-glucosamine-binding residues include Y365 and N376. Residues A379, 385-386 (NY), A422, and R441 contribute to the acetyl-CoA site. Residues 601–621 (ATPPSPQRADGTGVGIPSCPP) are disordered.

This sequence in the N-terminal section; belongs to the N-acetylglucosamine-1-phosphate uridyltransferase family. The protein in the C-terminal section; belongs to the transferase hexapeptide repeat family. As to quaternary structure, homotrimer. Mg(2+) serves as cofactor.

Its subcellular location is the cytoplasm. It catalyses the reaction alpha-D-glucosamine 1-phosphate + acetyl-CoA = N-acetyl-alpha-D-glucosamine 1-phosphate + CoA + H(+). The catalysed reaction is N-acetyl-alpha-D-glucosamine 1-phosphate + UTP + H(+) = UDP-N-acetyl-alpha-D-glucosamine + diphosphate. The protein operates within nucleotide-sugar biosynthesis; UDP-N-acetyl-alpha-D-glucosamine biosynthesis; N-acetyl-alpha-D-glucosamine 1-phosphate from alpha-D-glucosamine 6-phosphate (route II): step 2/2. It participates in nucleotide-sugar biosynthesis; UDP-N-acetyl-alpha-D-glucosamine biosynthesis; UDP-N-acetyl-alpha-D-glucosamine from N-acetyl-alpha-D-glucosamine 1-phosphate: step 1/1. It functions in the pathway bacterial outer membrane biogenesis; LPS lipid A biosynthesis. Its function is as follows. Catalyzes the last two sequential reactions in the de novo biosynthetic pathway for UDP-N-acetylglucosamine (UDP-GlcNAc). The C-terminal domain catalyzes the transfer of acetyl group from acetyl coenzyme A to glucosamine-1-phosphate (GlcN-1-P) to produce N-acetylglucosamine-1-phosphate (GlcNAc-1-P), which is converted into UDP-GlcNAc by the transfer of uridine 5-monophosphate (from uridine 5-triphosphate), a reaction catalyzed by the N-terminal domain. In Synechococcus sp. (strain JA-3-3Ab) (Cyanobacteria bacterium Yellowstone A-Prime), this protein is Bifunctional protein GlmU.